Here is a 161-residue protein sequence, read N- to C-terminus: Peptidyl-prolyl cis-trans isomerase-like 3 (161 aa).

The region spanning 1 to 154 (MAVTLHTDVG…NDVHIKDITI (154 aa)) is the PPIase cyclophilin-type domain.

The protein belongs to the cyclophilin-type PPIase family. PPIL3 subfamily.

The catalysed reaction is [protein]-peptidylproline (omega=180) = [protein]-peptidylproline (omega=0). Functionally, PPIases accelerate the folding of proteins. It catalyzes the cis-trans isomerization of proline imidic peptide bonds in oligopeptides. The chain is Peptidyl-prolyl cis-trans isomerase-like 3 (PPIL3) from Gallus gallus (Chicken).